The chain runs to 259 residues: MPDITDLFAQRATLRRSTSLLTAFRFEQSAPERFYGTLAQDTVHLITDLWQQAEGVALRGRTVLDVGGGPGYFASAFADAGARYIGVEPDPREMHAAPQGHRGIQDPRTTYLRASGMALPLADNSVDICLSSNVAEHVPQPWRLGEEMLRVTRPGGLAILSYTVWLGPFGGHEMGLTHYFGGARAARWYTRKHGHPPKNNYGSSLFPVSVRDGLRWARDTGTLTAAFPRYHPKWAWWITKIPALREVLVSNLVLVLRPR.

It belongs to the methyltransferase superfamily.

This is an uncharacterized protein from Mycobacteroides abscessus (strain ATCC 19977 / DSM 44196 / CCUG 20993 / CIP 104536 / JCM 13569 / NCTC 13031 / TMC 1543 / L948) (Mycobacterium abscessus).